The primary structure comprises 283 residues: Nucleotide-binding protein Hore_15880 (283 aa).

Residue 8–15 coordinates ATP; it reads GMSGAGKS. 57–60 is a binding site for GTP; the sequence is DIRG.

This sequence belongs to the RapZ-like family.

Its function is as follows. Displays ATPase and GTPase activities. The polypeptide is Nucleotide-binding protein Hore_15880 (Halothermothrix orenii (strain H 168 / OCM 544 / DSM 9562)).